A 515-amino-acid chain; its full sequence is Bifunctional purine biosynthesis protein PurH (515 aa).

Residues 1–145 enclose the MGS-like domain; sequence MTKRALISVS…KNHASVTVVV (145 aa).

The protein belongs to the PurH family.

It catalyses the reaction (6R)-10-formyltetrahydrofolate + 5-amino-1-(5-phospho-beta-D-ribosyl)imidazole-4-carboxamide = 5-formamido-1-(5-phospho-D-ribosyl)imidazole-4-carboxamide + (6S)-5,6,7,8-tetrahydrofolate. The enzyme catalyses IMP + H2O = 5-formamido-1-(5-phospho-D-ribosyl)imidazole-4-carboxamide. Its pathway is purine metabolism; IMP biosynthesis via de novo pathway; 5-formamido-1-(5-phospho-D-ribosyl)imidazole-4-carboxamide from 5-amino-1-(5-phospho-D-ribosyl)imidazole-4-carboxamide (10-formyl THF route): step 1/1. It participates in purine metabolism; IMP biosynthesis via de novo pathway; IMP from 5-formamido-1-(5-phospho-D-ribosyl)imidazole-4-carboxamide: step 1/1. The sequence is that of Bifunctional purine biosynthesis protein PurH from Streptococcus pyogenes serotype M6 (strain ATCC BAA-946 / MGAS10394).